Here is a 36-residue protein sequence, read N- to C-terminus: Potassium channel toxin alpha-KTx 16.9 (36 aa).

3 disulfide bridges follow: Cys7/Cys28, Cys13/Cys33, and Cys17/Cys35.

The protein belongs to the short scorpion toxin superfamily. Potassium channel inhibitor family. Alpha-KTx 16 subfamily. As to expression, expressed by the venom gland.

It localises to the secreted. In terms of biological role, poorly competes with (125)I-kaliotoxin binding on rat brain synaptosome (IC(50)&gt;100 nM). Is a poor Kv1.3/KCNA3 ligand. May have as real target KCa1.1/KCNMA1 channel. Shows weak toxicity on mice. This is Potassium channel toxin alpha-KTx 16.9 from Buthus paris (Scorpion).